The following is a 318-amino-acid chain: Ribose-phosphate pyrophosphokinase 2 (318 aa).

96–101 (RQDKKD) contributes to the ATP binding site. Mg(2+) contacts are provided by Asp-128, His-130, Asp-139, and Asp-143. An ATP-binding site is contributed by His-130. The interval 212-227 (KDRVAILVDDMADTCG) is binding of phosphoribosylpyrophosphate.

Belongs to the ribose-phosphate pyrophosphokinase family. Homodimer. The active form is probably a hexamer composed of 3 homodimers. Mg(2+) is required as a cofactor.

The enzyme catalyses D-ribose 5-phosphate + ATP = 5-phospho-alpha-D-ribose 1-diphosphate + AMP + H(+). It participates in metabolic intermediate biosynthesis; 5-phospho-alpha-D-ribose 1-diphosphate biosynthesis; 5-phospho-alpha-D-ribose 1-diphosphate from D-ribose 5-phosphate (route I): step 1/1. With respect to regulation, activated by magnesium and inorganic phosphate. Competitively or non-competitively inhibited by ADP, 2,3-bisphosphoglyceride or GDP. Catalyzes the synthesis of phosphoribosylpyrophosphate (PRPP) that is essential for nucleotide synthesis. This Mus musculus (Mouse) protein is Ribose-phosphate pyrophosphokinase 2 (Prps2).